The following is a 725-amino-acid chain: Ribosomal RNA large subunit methyltransferase K/L (725 aa).

Residues 46–157 enclose the THUMP domain; sequence VGYRLCLWSR…KGQAVLSLDL (112 aa).

This sequence belongs to the methyltransferase superfamily. RlmKL family.

Its subcellular location is the cytoplasm. It carries out the reaction guanosine(2445) in 23S rRNA + S-adenosyl-L-methionine = N(2)-methylguanosine(2445) in 23S rRNA + S-adenosyl-L-homocysteine + H(+). The enzyme catalyses guanosine(2069) in 23S rRNA + S-adenosyl-L-methionine = N(2)-methylguanosine(2069) in 23S rRNA + S-adenosyl-L-homocysteine + H(+). Functionally, specifically methylates the guanine in position 2445 (m2G2445) and the guanine in position 2069 (m7G2069) of 23S rRNA. This Stutzerimonas stutzeri (strain A1501) (Pseudomonas stutzeri) protein is Ribosomal RNA large subunit methyltransferase K/L.